The following is a 254-amino-acid chain: Ribosomal RNA small subunit methyltransferase J (254 aa).

S-adenosyl-L-methionine is bound by residues 107–108, 123–124, and Asp-177; these read RD and ER.

It belongs to the methyltransferase superfamily. RsmJ family.

It localises to the cytoplasm. The catalysed reaction is guanosine(1516) in 16S rRNA + S-adenosyl-L-methionine = N(2)-methylguanosine(1516) in 16S rRNA + S-adenosyl-L-homocysteine + H(+). Specifically methylates the guanosine in position 1516 of 16S rRNA. In Histophilus somni (strain 129Pt) (Haemophilus somnus), this protein is Ribosomal RNA small subunit methyltransferase J.